Consider the following 88-residue polypeptide: uncharacterized protein (88 aa).

The segment at 39-63 (CEECGAPIPQARREAIPGVRLCIHC) adopts a dksA C4-type zinc-finger fold.

This is an uncharacterized protein from Escherichia coli (strain K12).